A 227-amino-acid polypeptide reads, in one-letter code: Cytochrome c oxidase subunit 2 (227 aa).

Topologically, residues 1-14 (MAYPLQLGLQDATS) are mitochondrial intermembrane. The chain crosses the membrane as a helical span at residues 15–45 (PIMEELMNFHDHTLMIVFLISSLVLYVISSM). The Mitochondrial matrix portion of the chain corresponds to 46–59 (LTTKLTHTSTMDAQ). The helical transmembrane segment at 60–87 (EVETIWTILPAVILIMIALPSLRILYMM) threads the bilayer. The Mitochondrial intermembrane portion of the chain corresponds to 88 to 227 (DEINNPVLTV…NFETWSVSMI (140 aa)). His-161, Cys-196, Glu-198, Cys-200, His-204, and Met-207 together coordinate Cu cation. Residue Glu-198 coordinates Mg(2+).

It belongs to the cytochrome c oxidase subunit 2 family. In terms of assembly, component of the cytochrome c oxidase (complex IV, CIV), a multisubunit enzyme composed of 14 subunits. The complex is composed of a catalytic core of 3 subunits MT-CO1, MT-CO2 and MT-CO3, encoded in the mitochondrial DNA, and 11 supernumerary subunits COX4I, COX5A, COX5B, COX6A, COX6B, COX6C, COX7A, COX7B, COX7C, COX8 and NDUFA4, which are encoded in the nuclear genome. The complex exists as a monomer or a dimer and forms supercomplexes (SCs) in the inner mitochondrial membrane with NADH-ubiquinone oxidoreductase (complex I, CI) and ubiquinol-cytochrome c oxidoreductase (cytochrome b-c1 complex, complex III, CIII), resulting in different assemblies (supercomplex SCI(1)III(2)IV(1) and megacomplex MCI(2)III(2)IV(2)). Found in a complex with TMEM177, COA6, COX18, COX20, SCO1 and SCO2. Interacts with TMEM177 in a COX20-dependent manner. Interacts with COX20. Interacts with COX16. It depends on Cu cation as a cofactor.

Its subcellular location is the mitochondrion inner membrane. It carries out the reaction 4 Fe(II)-[cytochrome c] + O2 + 8 H(+)(in) = 4 Fe(III)-[cytochrome c] + 2 H2O + 4 H(+)(out). In terms of biological role, component of the cytochrome c oxidase, the last enzyme in the mitochondrial electron transport chain which drives oxidative phosphorylation. The respiratory chain contains 3 multisubunit complexes succinate dehydrogenase (complex II, CII), ubiquinol-cytochrome c oxidoreductase (cytochrome b-c1 complex, complex III, CIII) and cytochrome c oxidase (complex IV, CIV), that cooperate to transfer electrons derived from NADH and succinate to molecular oxygen, creating an electrochemical gradient over the inner membrane that drives transmembrane transport and the ATP synthase. Cytochrome c oxidase is the component of the respiratory chain that catalyzes the reduction of oxygen to water. Electrons originating from reduced cytochrome c in the intermembrane space (IMS) are transferred via the dinuclear copper A center (CU(A)) of subunit 2 and heme A of subunit 1 to the active site in subunit 1, a binuclear center (BNC) formed by heme A3 and copper B (CU(B)). The BNC reduces molecular oxygen to 2 water molecules using 4 electrons from cytochrome c in the IMS and 4 protons from the mitochondrial matrix. The polypeptide is Cytochrome c oxidase subunit 2 (MT-CO2) (Malacothrix typica (Long-eared mouse)).